A 201-amino-acid chain; its full sequence is Imidazoleglycerol-phosphate dehydratase (201 aa).

This sequence belongs to the imidazoleglycerol-phosphate dehydratase family.

It localises to the cytoplasm. The catalysed reaction is D-erythro-1-(imidazol-4-yl)glycerol 3-phosphate = 3-(imidazol-4-yl)-2-oxopropyl phosphate + H2O. The protein operates within amino-acid biosynthesis; L-histidine biosynthesis; L-histidine from 5-phospho-alpha-D-ribose 1-diphosphate: step 6/9. The chain is Imidazoleglycerol-phosphate dehydratase from Prochlorococcus marinus subsp. pastoris (strain CCMP1986 / NIES-2087 / MED4).